The primary structure comprises 547 residues: MAAKEVKFGDSGRKKMLAGVNVLADAVKATLGPKGRNVIIEKSFGAPLITKDGVSVAKEIELKDRFENMGAQLVKDVASRANDDAGDGTTTATVLAQAIVNEGLKAVAAGMNPMDLKRGIDKATIAIVAELKKLSKPCTDTKAIAQVGTISANSDHSIGDIIAEAMEKVTKDGVITVEEGSGLENELSVVEGMQFDRGYLSPYFINKPDTMVAELDSPLLLLVDKKISNIREMLPVLEAVAKAGRPLLIVAEDVEGEALATLVVNNMRGIVKVAAVKAPGFGDRRKAMLQDIAVLTGGTVISEEIGLSLETTTLEHLGNAKRVILNKENTTIIDGAGVKTDIDSRISQIRQQIGDTSSDYDKEKLQERLAKLSGGVAVIKVGAGSEVEMKEKKARVEDALHATRAAVEEGVVPGGGVALVRSLQAIEGLKGDNADQDVGIALLRRAVEAPLRQIVANSGDEPSVVVDKVKQGSGNYGYNAASGEYGDMIEMGILDPAKVTRSALQAASSIASLMITTEAMIADVPEDKPAGGGMPDMGGMGGMGGMM.

ATP contacts are provided by residues Thr30–Pro33, Lys51, Asp87–Thr91, Gly415, Asn479–Ala481, and Asp495.

The protein belongs to the chaperonin (HSP60) family. As to quaternary structure, forms a cylinder of 14 subunits composed of two heptameric rings stacked back-to-back. Interacts with the co-chaperonin GroES.

Its subcellular location is the cytoplasm. The enzyme catalyses ATP + H2O + a folded polypeptide = ADP + phosphate + an unfolded polypeptide.. Its function is as follows. Together with its co-chaperonin GroES, plays an essential role in assisting protein folding. The GroEL-GroES system forms a nano-cage that allows encapsulation of the non-native substrate proteins and provides a physical environment optimized to promote and accelerate protein folding. The polypeptide is Chaperonin GroEL (Pseudomonas syringae pv. syringae (strain B728a)).